Here is a 697-residue protein sequence, read N- to C-terminus: DNA ligase (697 aa).

NAD(+)-binding positions include Asp36–Asp40, Ser85–Leu86, and Glu123. Lys125 serves as the catalytic N6-AMP-lysine intermediate. Positions 146, 182, 320, and 344 each coordinate NAD(+). Cys438, Cys441, Cys456, and Cys462 together coordinate Zn(2+). The 79-residue stretch at Pro619–Val697 folds into the BRCT domain.

Belongs to the NAD-dependent DNA ligase family. LigA subfamily. It depends on Mg(2+) as a cofactor. Mn(2+) is required as a cofactor.

It catalyses the reaction NAD(+) + (deoxyribonucleotide)n-3'-hydroxyl + 5'-phospho-(deoxyribonucleotide)m = (deoxyribonucleotide)n+m + AMP + beta-nicotinamide D-nucleotide.. DNA ligase that catalyzes the formation of phosphodiester linkages between 5'-phosphoryl and 3'-hydroxyl groups in double-stranded DNA using NAD as a coenzyme and as the energy source for the reaction. It is essential for DNA replication and repair of damaged DNA. The polypeptide is DNA ligase (Bordetella petrii (strain ATCC BAA-461 / DSM 12804 / CCUG 43448)).